The chain runs to 675 residues: Nexilin (675 aa).

The tract at residues 1–66 (MNDISQKAEI…RKEQYIRERE (66 aa)) is disordered. Lysine 16 bears the Phosphoserine mark. Over residues 27 to 66 (GKGDVKDKFEAMQRAREERNQRRSRDEKQRRKEQYIRERE) the composition is skewed to basic and acidic residues. A Phosphoserine modification is found at serine 80. The disordered stretch occupies residues 105 to 127 (RFAEMEKQRQEEQRKRTEEERKR). Residue serine 241 is modified to Phosphoserine. 2 disordered regions span residues 254–278 (LERQ…EEEK) and 313–336 (SFEE…ARRR). A phosphoserine mark is found at serine 357 and serine 365. At threonine 370 the chain carries Phosphothreonine. Disordered stretches follow at residues 487–513 (ENFH…KVNM) and 551–584 (LQKK…APWF). Serine 564 and serine 569 each carry phosphoserine. The Ig-like domain maps to 582–670 (PWFKKPLKNT…GSAASTCILT (89 aa)).

In terms of assembly, interacts with F-actin. As to expression, abundantly expressed in heart and skeletal muscle, and at lower levels in placenta, lung, liver and pancreas. Also expressed in HeLaS3 and MOLT-4 cell lines.

The protein resides in the cytoplasm. It is found in the cytoskeleton. Its subcellular location is the cell junction. It localises to the adherens junction. The protein localises to the myofibril. The protein resides in the sarcomere. It is found in the z line. Functionally, involved in regulating cell migration through association with the actin cytoskeleton. Has an essential role in the maintenance of Z line and sarcomere integrity. The polypeptide is Nexilin (Homo sapiens (Human)).